Consider the following 62-residue polypeptide: DNA-directed RNA polymerase subunit Rpo10 (62 aa).

Cys6, Cys9, Cys43, and Cys44 together coordinate Zn(2+).

The protein belongs to the archaeal Rpo10/eukaryotic RPB10 RNA polymerase subunit family. In terms of assembly, part of the RNA polymerase complex. Zn(2+) serves as cofactor.

The protein localises to the cytoplasm. It catalyses the reaction RNA(n) + a ribonucleoside 5'-triphosphate = RNA(n+1) + diphosphate. Functionally, DNA-dependent RNA polymerase (RNAP) catalyzes the transcription of DNA into RNA using the four ribonucleoside triphosphates as substrates. The sequence is that of DNA-directed RNA polymerase subunit Rpo10 from Methanoregula boonei (strain DSM 21154 / JCM 14090 / 6A8).